A 531-amino-acid polypeptide reads, in one-letter code: Doublesex- and mab-3-related transcription factor A2 (531 aa).

The DM DNA-binding region spans Cys69–Arg116. The interval Leu197 to Pro312 is disordered. The span at Pro274 to Gly285 shows a compositional bias: low complexity. Residues Arg310 to Gln345 enclose the DMA domain.

This sequence belongs to the DMRT family. As to expression, expressed in adult brain and testis, as well as in embryonic ovary, kidney, heart, lung, stomach and brain.

It is found in the nucleus. Its function is as follows. May be involved in sexual development. This Mus musculus (Mouse) protein is Doublesex- and mab-3-related transcription factor A2 (Dmrta2).